The following is a 140-amino-acid chain: Transcription antitermination protein NusB (140 aa).

This sequence belongs to the NusB family.

In terms of biological role, involved in transcription antitermination. Required for transcription of ribosomal RNA (rRNA) genes. Binds specifically to the boxA antiterminator sequence of the ribosomal RNA (rrn) operons. This is Transcription antitermination protein NusB from Pseudoalteromonas atlantica (strain T6c / ATCC BAA-1087).